Here is a 325-residue protein sequence, read N- to C-terminus: Tagatose 1,6-diphosphate aldolase (325 aa).

Belongs to the aldolase LacD family.

It carries out the reaction D-tagatofuranose 1,6-bisphosphate = D-glyceraldehyde 3-phosphate + dihydroxyacetone phosphate. The protein operates within carbohydrate metabolism; D-tagatose 6-phosphate degradation; D-glyceraldehyde 3-phosphate and glycerone phosphate from D-tagatose 6-phosphate: step 2/2. The sequence is that of Tagatose 1,6-diphosphate aldolase from Staphylococcus epidermidis (strain ATCC 12228 / FDA PCI 1200).